Consider the following 425-residue polypeptide: Probable proline--tRNA ligase, mitochondrial (425 aa).

It belongs to the class-II aminoacyl-tRNA synthetase family.

It is found in the mitochondrion. The catalysed reaction is tRNA(Pro) + L-proline + ATP = L-prolyl-tRNA(Pro) + AMP + diphosphate. This is Probable proline--tRNA ligase, mitochondrial from Schizosaccharomyces pombe (strain 972 / ATCC 24843) (Fission yeast).